A 379-amino-acid chain; its full sequence is Glutamate 5-kinase (379 aa).

Residue lysine 15 coordinates ATP. Serine 54, aspartate 144, and asparagine 156 together coordinate substrate. 176 to 177 (TD) lines the ATP pocket. The PUA domain maps to 282-360 (KGVILVDAGA…GEIERALGYK (79 aa)).

Belongs to the glutamate 5-kinase family.

It is found in the cytoplasm. It catalyses the reaction L-glutamate + ATP = L-glutamyl 5-phosphate + ADP. It participates in amino-acid biosynthesis; L-proline biosynthesis; L-glutamate 5-semialdehyde from L-glutamate: step 1/2. Its function is as follows. Catalyzes the transfer of a phosphate group to glutamate to form L-glutamate 5-phosphate. In Anaeromyxobacter dehalogenans (strain 2CP-C), this protein is Glutamate 5-kinase.